A 61-amino-acid chain; its full sequence is SPbeta prophage-derived uncharacterized protein YotK (61 aa).

Residues 7–57 (SIQTLLNKMDRQMKTVKEAIEEKDLQRAHRNLINLADNNEELMQEIRWVKK) adopt a coiled-coil conformation.

The chain is SPbeta prophage-derived uncharacterized protein YotK (yotK) from Bacillus subtilis (strain 168).